We begin with the raw amino-acid sequence, 904 residues long: Translation initiation factor IF-2 (904 aa).

Disordered regions lie at residues 134–248 (RQRN…GSHV) and 267–315 (HLSA…FERP). Over residues 136-177 (RNLDEQQRLAESDRVRDEEIQRKRDEEQAAKDRAEAERKAAE) the composition is skewed to basic and acidic residues. Low complexity-rich tracts occupy residues 178–230 (EAAA…STPA) and 285–303 (GRPG…RGSN). The tr-type G domain maps to 403–572 (TRPPVVTIMG…SLQAEVLELK (170 aa)). The G1 stretch occupies residues 412–419 (GHVDHGKT). 412-419 (GHVDHGKT) is a GTP binding site. Positions 437–441 (GITQH) are G2. Positions 458–461 (DTPG) are G3. GTP-binding positions include 458 to 462 (DTPGH) and 512 to 515 (NKID). A G4 region spans residues 512–515 (NKID). Positions 548–550 (SAK) are G5.

It belongs to the TRAFAC class translation factor GTPase superfamily. Classic translation factor GTPase family. IF-2 subfamily.

Its subcellular location is the cytoplasm. In terms of biological role, one of the essential components for the initiation of protein synthesis. Protects formylmethionyl-tRNA from spontaneous hydrolysis and promotes its binding to the 30S ribosomal subunits. Also involved in the hydrolysis of GTP during the formation of the 70S ribosomal complex. The chain is Translation initiation factor IF-2 from Xanthomonas oryzae pv. oryzae (strain PXO99A).